The chain runs to 720 residues: NADH-ubiquinone oxidoreductase 78 kDa subunit, mitochondrial (720 aa).

A mitochondrion-targeting transit peptide spans 1-23 (MNSIKSHILRSSKRYISASSKRL). The 79-residue stretch at 24–102 (AEVEVTVDGR…GMVVHTDSER (79 aa)) folds into the 2Fe-2S ferredoxin-type domain. [2Fe-2S] cluster is bound by residues Cys-58, Cys-69, Cys-72, and Cys-86. Residues 102–141 (RIKKAREGVTEMLLENHPLDCPVCDQGGECDLQEQSQRYG) enclose the 4Fe-4S His(Cys)3-ligated-type domain. In terms of domain architecture, 4Fe-4S Mo/W bis-MGD-type spans 241 to 297 (LKRTETIDVLDAVGSNIRVDTRGIEVMRVLPRLNDDVNEEWISDKTRFACDGLKTQR).

Belongs to the complex I 75 kDa subunit family. As to quaternary structure, core subunit of respiratory chain NADH dehydrogenase (Complex I) which is composed of 45 different subunits. This is the largest subunit of complex I and it is a component of the iron-sulfur (IP) fragment of the enzyme. The cofactor is [2Fe-2S] cluster. It depends on [4Fe-4S] cluster as a cofactor.

The protein localises to the mitochondrion. It catalyses the reaction a ubiquinone + NADH + 5 H(+)(in) = a ubiquinol + NAD(+) + 4 H(+)(out). Functionally, core subunit of the mitochondrial membrane respiratory chain NADH dehydrogenase (Complex I) which catalyzes electron transfer from NADH through the respiratory chain, using ubiquinone as an electron acceptor. Essential for catalysing the entry and efficient transfer of electrons within complex I. Plays a key role in the assembly and stability of complex I and participates in the association of complex I with ubiquinol-cytochrome reductase complex (Complex III) to form supercomplexes. Plays a role in cell wall integrity and is involved in osmotic and oxidative resistance, yeast to hypha transition, and the ability to damage and invade oral epithelial cells. The sequence is that of NADH-ubiquinone oxidoreductase 78 kDa subunit, mitochondrial from Candida albicans (strain SC5314 / ATCC MYA-2876) (Yeast).